A 398-amino-acid chain; its full sequence is Succinate--CoA ligase [ADP-forming] subunit beta (398 aa).

The ATP-grasp domain maps to 9–254 (KALLHEFGVP…ETEEDAKEIE (246 aa)). Residues K46, 53–55 (GRG), E109, S112, and E117 contribute to the ATP site. Residues N209 and D223 each contribute to the Mg(2+) site. Substrate-binding positions include N274 and 331–333 (GIM).

The protein belongs to the succinate/malate CoA ligase beta subunit family. In terms of assembly, heterotetramer of two alpha and two beta subunits. The cofactor is Mg(2+).

The enzyme catalyses succinate + ATP + CoA = succinyl-CoA + ADP + phosphate. It catalyses the reaction GTP + succinate + CoA = succinyl-CoA + GDP + phosphate. The protein operates within carbohydrate metabolism; tricarboxylic acid cycle; succinate from succinyl-CoA (ligase route): step 1/1. Its function is as follows. Succinyl-CoA synthetase functions in the citric acid cycle (TCA), coupling the hydrolysis of succinyl-CoA to the synthesis of either ATP or GTP and thus represents the only step of substrate-level phosphorylation in the TCA. The beta subunit provides nucleotide specificity of the enzyme and binds the substrate succinate, while the binding sites for coenzyme A and phosphate are found in the alpha subunit. This Bradyrhizobium sp. (strain ORS 278) protein is Succinate--CoA ligase [ADP-forming] subunit beta.